The chain runs to 1626 residues: DNA topoisomerase 2-beta (1626 aa).

At Ala2 the chain carries N-acetylalanine. The residue at position 3 (Lys3) is an N6-acetyllysine. Residues Gln28, Asn29, Lys33, and Lys34 each participate in a glycyl lysine isopeptide (Lys-Gly) (interchain with G-Cter in SUMO2) cross-link. ATP-binding positions include Asn112, Asn141, and 169-171 (SSN). Glycyl lysine isopeptide (Lys-Gly) (interchain with G-Cter in SUMO2) cross-links involve residues Lys177 and Lys178. Residue 182–189 (GRNGYGAK) participates in ATP binding. Glycyl lysine isopeptide (Lys-Gly) (interchain with G-Cter in SUMO2) cross-links involve residues Lys228 and Lys299. Residues 363 to 365 (KKK) form an interaction with DNA region. Glycyl lysine isopeptide (Lys-Gly) (interchain with G-Cter in SUMO2) cross-links involve residues Lys367 and Lys373. An ATP-binding site is contributed by 397–399 (QTK). Residues Lys437, Lys439, and Lys446 each participate in a glycyl lysine isopeptide (Lys-Gly) (interchain with G-Cter in SUMO2) cross-link. The Toprim domain occupies 476 to 593 (CTLILTEGDS…SLLKHGFLEE (118 aa)). Residues Glu482, Asp562, and Asp564 each coordinate Mg(2+). Residues Lys600, Lys605, Lys635, Lys643, Lys646, Lys676, and Lys712 each participate in a glycyl lysine isopeptide (Lys-Gly) (interchain with G-Cter in SUMO2) cross-link. Positions 736–1189 (IPSLVDGFKP…SPSDLWKEDL (454 aa)) constitute a Topo IIA-type catalytic domain. Tyr826 acts as the O-(5'-phospho-DNA)-tyrosine intermediate in catalysis. Residues 1011–1020 (KLQTTLTCNS) form an interaction with DNA region. A Nuclear export signal motif is present at residues 1034-1044 (ETVQDILKEFF). Lys1092 is covalently cross-linked (Glycyl lysine isopeptide (Lys-Gly) (interchain with G-Cter in SUMO2)). Residues 1110-1140 (AWKEAQEKAAEEDETQNQHDDSSSDSGTPSG) form a disordered region. Residues Lys1214, Lys1217, Lys1226, and Lys1227 each participate in a glycyl lysine isopeptide (Lys-Gly) (interchain with G-Cter in SUMO2) cross-link. Residue Ser1236 is modified to Phosphoserine. Residues Lys1250, Lys1262, and Lys1271 each participate in a glycyl lysine isopeptide (Lys-Gly) (interchain with G-Cter in SUMO2) cross-link. A disordered region spans residues 1274–1604 (FDEEFSGAPV…PSLPRTGRAR (331 aa)). The residue at position 1292 (Thr1292) is a Phosphothreonine. Residues Lys1323 and Lys1327 each participate in a glycyl lysine isopeptide (Lys-Gly) (interchain with G-Cter in SUMO2) cross-link. Basic and acidic residues-rich tracts occupy residues 1334–1344 (PWSDDESKSES) and 1358–1370 (SLLR…RPKY). Ser1336, Ser1340, Ser1342, Ser1344, and Ser1358 each carry phosphoserine. Position 1370 is a phosphotyrosine (Tyr1370). Positions 1374–1392 (FSEEEDDDADDDDDDNNDL) are enriched in acidic residues. At Ser1375 the chain carries Phosphoserine. A Glycyl lysine isopeptide (Lys-Gly) (interchain with G-Cter in SUMO2) cross-link involves residue Lys1398. Ser1400 is modified (phosphoserine). Residue Thr1403 is modified to Phosphothreonine. Ser1413 is modified (phosphoserine). At Tyr1421 the chain carries Phosphotyrosine. Ser1424 carries the phosphoserine modification. The span at 1430–1442 (ATPEKSLHDKKSQ) shows a compositional bias: basic and acidic residues. Lys1440 participates in a covalent cross-link: Glycyl lysine isopeptide (Lys-Gly) (interchain with G-Cter in SUMO2). Phosphoserine occurs at positions 1441, 1452, and 1454. A Glycyl lysine isopeptide (Lys-Gly) (interchain with G-Cter in SUMO2) cross-link involves residue Lys1456. Residues 1456-1466 (KSEDDSAKFDS) show a composition bias toward basic and acidic residues. Phosphoserine is present on residues Ser1461, Ser1466, Ser1473, and Ser1476. Lys1490 is covalently cross-linked (Glycyl lysine isopeptide (Lys-Gly) (interchain with G-Cter in SUMO2)). The interaction with PLSCR1 stretch occupies residues 1506–1512 (KPKRAPK). 3 positions are modified to phosphoserine: Ser1522, Ser1524, and Ser1526. A compositionally biased stretch (basic residues) spans 1539–1549 (GKGRGAKKRKA). 2 positions are modified to phosphoserine: Ser1550 and Ser1552. Residues 1563 to 1574 (KTSKTTSKKPKK) are compositionally biased toward basic residues. Residue Thr1575 is modified to Phosphothreonine. Phosphoserine occurs at positions 1576 and 1581. Thr1592 is modified (phosphothreonine). Ser1596 bears the Phosphoserine mark. Tyr1609 carries the post-translational modification Phosphotyrosine. Residue Ser1613 is modified to Phosphoserine.

This sequence belongs to the type II topoisomerase family. Homodimer. Interacts with KIAA1210. Interacts with PLSCR1. Requires Mg(2+) as cofactor. Mn(2+) is required as a cofactor. Ca(2+) serves as cofactor. Post-translationally, (Microbial infection) Deubiquitinated by Epstein-Barr virus BPLF1; leading to stabilized SUMOylated TOP2A trapped in cleavage complexes, which halts the DNA damage response to TOP2A-induced double-strand DNA breaks. In terms of processing, SUMOylated. In terms of tissue distribution, expressed in the tonsil, spleen, lymph node, thymus, skin, pancreas, testis, colon, kidney, liver, brain and lung. Also found in breast, colon and lung carcinomas, Hodgkin's disease, large-cell non-Hodgkin's lymphoma, lymphocytic lymphomas and seminomas.

It is found in the nucleus. The protein localises to the nucleolus. Its subcellular location is the nucleoplasm. It catalyses the reaction ATP-dependent breakage, passage and rejoining of double-stranded DNA.. In terms of biological role, key decatenating enzyme that alters DNA topology by binding to two double-stranded DNA molecules, generating a double-stranded break in one of the strands, passing the intact strand through the broken strand, and religating the broken strand. Plays a role in B-cell differentiation. This chain is DNA topoisomerase 2-beta (TOP2B), found in Homo sapiens (Human).